The sequence spans 209 residues: Endoplasmic reticulum vesicle protein 25 (209 aa).

An N-terminal signal peptide occupies residues M1–A18. The Lumenal segment spans residues L19 to R178. The GOLD domain maps to P31–S119. A helical membrane pass occupies residues N179 to L199. Over K200 to I209 the chain is Cytoplasmic.

It belongs to the EMP24/GP25L family.

The protein localises to the endoplasmic reticulum membrane. Its subcellular location is the golgi apparatus membrane. Constituent of COPII-coated endoplasmic reticulum-derived transport vesicles. Required for efficient transport of a subset of secretory proteins to the Golgi. Facilitates retrograde transport from the Golgi to the endoplasmic reticulum. In Eremothecium gossypii (strain ATCC 10895 / CBS 109.51 / FGSC 9923 / NRRL Y-1056) (Yeast), this protein is Endoplasmic reticulum vesicle protein 25 (ERV25).